Here is a 156-residue protein sequence, read N- to C-terminus: Small ribosomal subunit protein uS7 (156 aa).

This sequence belongs to the universal ribosomal protein uS7 family. As to quaternary structure, part of the 30S ribosomal subunit. Contacts proteins S9 and S11.

Its function is as follows. One of the primary rRNA binding proteins, it binds directly to 16S rRNA where it nucleates assembly of the head domain of the 30S subunit. Is located at the subunit interface close to the decoding center, probably blocks exit of the E-site tRNA. The chain is Small ribosomal subunit protein uS7 from Streptococcus pyogenes serotype M3 (strain ATCC BAA-595 / MGAS315).